Consider the following 394-residue polypeptide: Elongation factor Tu (394 aa).

The tr-type G domain maps to 10–204 (KPHVNIGTIG…AVDSYIPQPV (195 aa)). Residues 19-26 (GHVDHGKT) are G1. Position 19-26 (19-26 (GHVDHGKT)) interacts with GTP. Residue threonine 26 participates in Mg(2+) binding. A G2 region spans residues 60–64 (GITIS). A G3 region spans residues 81-84 (DCPG). GTP contacts are provided by residues 81 to 85 (DCPGH) and 136 to 139 (NKVD). Positions 136–139 (NKVD) are G4. The interval 174–176 (SAL) is G5.

The protein belongs to the TRAFAC class translation factor GTPase superfamily. Classic translation factor GTPase family. EF-Tu/EF-1A subfamily. In terms of assembly, monomer.

Its subcellular location is the cytoplasm. The catalysed reaction is GTP + H2O = GDP + phosphate + H(+). Its function is as follows. GTP hydrolase that promotes the GTP-dependent binding of aminoacyl-tRNA to the A-site of ribosomes during protein biosynthesis. In Rickettsia rhipicephali, this protein is Elongation factor Tu.